The sequence spans 510 residues: Serine/threonine-protein kinase UL13 homolog (510 aa).

Residues methionine 1–methionine 63 are disordered. The region spanning arginine 132–arginine 458 is the Protein kinase domain. ATP contacts are provided by residues alanine 138–valine 146 and lysine 157. Aspartate 257 serves as the catalytic Proton acceptor.

Belongs to the protein kinase superfamily. Ser/Thr protein kinase family. In terms of processing, autophosphorylated.

Its subcellular location is the virion tegument. It is found in the host nucleus. It catalyses the reaction L-seryl-[protein] + ATP = O-phospho-L-seryl-[protein] + ADP + H(+). The enzyme catalyses L-threonyl-[protein] + ATP = O-phospho-L-threonyl-[protein] + ADP + H(+). Its function is as follows. Multifunctional serine/threonine kinase that plays a role in several processes including egress of virus particles from the nucleus, modulation of the actin cytoskeleton and regulation of viral and cellular gene expression. Regulates the nuclear localization of viral envelopment factor proteins 24 and 27, by phosphorylating the protein kinase ORF66, indicating a role in nuclear egress. Disrupts host nuclear lamins, including LMNA and LMNB1. Phosphorylates the viral Fc receptor composed of glycoproteins E (gE) and I (gI). Phosphorylation of glycoprotein E (gE) by UL13 alters its subcellular localization, from the host early endosome to the plasma membrane. Participates in the transcriptional regulation of cellular and viral mRNAs mainly by phosphorylating the viral transcriptional regulator IE63. The chain is Serine/threonine-protein kinase UL13 homolog from Varicella-zoster virus (strain Dumas) (HHV-3).